The following is a 99-amino-acid chain: Aspartyl/glutamyl-tRNA(Asn/Gln) amidotransferase subunit C (99 aa).

It belongs to the GatC family. Heterotrimer of A, B and C subunits.

The catalysed reaction is L-glutamyl-tRNA(Gln) + L-glutamine + ATP + H2O = L-glutaminyl-tRNA(Gln) + L-glutamate + ADP + phosphate + H(+). The enzyme catalyses L-aspartyl-tRNA(Asn) + L-glutamine + ATP + H2O = L-asparaginyl-tRNA(Asn) + L-glutamate + ADP + phosphate + 2 H(+). Allows the formation of correctly charged Asn-tRNA(Asn) or Gln-tRNA(Gln) through the transamidation of misacylated Asp-tRNA(Asn) or Glu-tRNA(Gln) in organisms which lack either or both of asparaginyl-tRNA or glutaminyl-tRNA synthetases. The reaction takes place in the presence of glutamine and ATP through an activated phospho-Asp-tRNA(Asn) or phospho-Glu-tRNA(Gln). This Burkholderia vietnamiensis (strain G4 / LMG 22486) (Burkholderia cepacia (strain R1808)) protein is Aspartyl/glutamyl-tRNA(Asn/Gln) amidotransferase subunit C.